Here is a 1102-residue protein sequence, read N- to C-terminus: Probable ubiquitin-conjugating enzyme E2 23 (1102 aa).

6 disordered regions span residues 1–20 (MEHE…DSSV), 25–111 (ASLS…DGNY), 396–418 (LPKV…PVHE), 579–602 (SPGN…SHQE), 661–710 (DESV…DIYA), and 760–800 (QAES…KNIL). Residues 31–44 (DSEHPNIYRQDIVK) show a composition bias toward basic and acidic residues. Positions 59–88 (GDSDSDSDISDEEEDDDDDEDNDDDDEDVE) are enriched in acidic residues. The segment covering 579–596 (SPGNSFEEATQQDNGYQD) has biased composition (polar residues). Residues 779-800 (SKVNVTDNCESKGTQANAKNIL) show a composition bias toward polar residues. Residues 850 to 1010 (QWFKKVDQDW…TFLLNCKTMM (161 aa)) enclose the UBC core domain. Residue C936 is the Glycyl thioester intermediate of the active site.

It belongs to the ubiquitin-conjugating enzyme family.

It carries out the reaction S-ubiquitinyl-[E1 ubiquitin-activating enzyme]-L-cysteine + [E2 ubiquitin-conjugating enzyme]-L-cysteine = [E1 ubiquitin-activating enzyme]-L-cysteine + S-ubiquitinyl-[E2 ubiquitin-conjugating enzyme]-L-cysteine.. It participates in protein modification; protein ubiquitination. Accepts the ubiquitin from the E1 complex and catalyzes its covalent attachment to other proteins. The polypeptide is Probable ubiquitin-conjugating enzyme E2 23 (UBC23) (Arabidopsis thaliana (Mouse-ear cress)).